Here is a 317-residue protein sequence, read N- to C-terminus: Glutathione synthetase (317 aa).

In terms of domain architecture, ATP-grasp spans 124–310; it reads EKLFTAWFPE…ITGKLMDAIE (187 aa). Residue 150–207 participates in ATP binding; sequence FRQEHGDIILKPLDGMGGASIFRVKENDPNVSVIIETLTNHGQNYAMAQTFVPDISNG. Positions 281 and 283 each coordinate Mg(2+).

The protein belongs to the prokaryotic GSH synthase family. Mg(2+) serves as cofactor. It depends on Mn(2+) as a cofactor.

The enzyme catalyses gamma-L-glutamyl-L-cysteine + glycine + ATP = glutathione + ADP + phosphate + H(+). The protein operates within sulfur metabolism; glutathione biosynthesis; glutathione from L-cysteine and L-glutamate: step 2/2. The chain is Glutathione synthetase from Vibrio vulnificus (strain CMCP6).